Reading from the N-terminus, the 1674-residue chain is Kinesin-like protein KIF21A (1674 aa).

Met-1 bears the N-acetylmethionine mark. In terms of domain architecture, Kinesin motor spans 9-371 (SVRVAVRIRP…LKYANRARNI (363 aa)). 88–95 (GQTGAGKT) contacts ATP. Positions 365–575 (ANRARNIKNK…NREERSVAGK (211 aa)) form a coiled coil. A Phosphoserine modification is found at Ser-524. 3 disordered regions span residues 556-641 (KKRL…DEKA), 779-804 (EEQEKARLTESRRNREIAQLKKDQRK), and 841-881 (SDKV…AQQK). Positions 560–597 (QKLEESNREERSVAGKEDNTDTDQEKKEEKGVSERENN) are enriched in basic and acidic residues. Residues 598 to 637 (ELEVEESQEVSDHEDEEEEEEEEEDDIDGGESSDESDSES) are compositionally biased toward acidic residues. The segment covering 851–865 (KLSSSDAPAQDTGSS) has biased composition (polar residues). 2 coiled-coil regions span residues 931-1019 (TDII…AKEE) and 1053-1083 (LQAAQKEAQIKVLEGRLKQTEITSATQNQLL). The segment at 1116 to 1138 (VEDSTDEDAPLNSPGSEGSTLSS) is disordered. A compositionally biased stretch (polar residues) spans 1128 to 1138 (SPGSEGSTLSS). Residues 1146 to 1167 (EVKPKNKARRRTTTQMELLYAD) form an interaction with KANK1 and KANK2 region. 2 stretches are compositionally biased toward polar residues: residues 1170–1179 (ELASDTSTGD) and 1196–1205 (GMNTETSGTS). Positions 1170-1318 (ELASDTSTGD…SSLSEVHRSS (149 aa)) are disordered. Ser-1212, Ser-1225, Ser-1229, and Ser-1239 each carry phosphoserine. Residues 1245–1262 (KAYEKAEKSKAKEQKHSD) show a composition bias toward basic and acidic residues. A compositionally biased stretch (polar residues) spans 1288 to 1297 (NRLTVSQGNT). WD repeat units lie at residues 1345–1382 (GHTKAVLCVDSTDDLLFTGSKDRTCKVWNLVTGQEIMS), 1385–1423 (GHPNNVVSVKYCNYTSLVFTVSTSYIKVWDIRDSAKCIR), 1449–1487 (SGENQINQIALNPTGTFLYAASGNAVRMWDLKRFQSTGK), 1490–1532 (GHLG…LGTV), 1541–1578 (PHYDGIEALTIQGDNLFSGSRDNGIKKWDLTQKDLLQQ), 1582–1621 (AHKDWVCALGVVPDHPVLLSGCRGGILKVWNMDTFMPVGE), and 1624–1661 (GHDSPINAICVNSTHIFTAADDRTVRIWKARNLQDGQI). A Phosphoserine modification is found at Ser-1662. Thr-1664 is modified (phosphothreonine). The residue at position 1673 (Ser-1673) is a Phosphoserine.

Belongs to the TRAFAC class myosin-kinesin ATPase superfamily. Kinesin family. As to quaternary structure, part of a cortical microtubule stabilization complex (CMSC) composed of KANK1, PPFIA1, PPFIBP1, ERC1/ELKS, PHLDB2/LL5beta, CLASPs, KIF21A and possibly additional interactors; within CMSCs KANK1 and PHLDB2/LL5beta seem to be the core components for recruiting microtubule-binding proteins KIF21A and CLASPs, whereas PPFIA1, PPFIBP1 and ERC1/ELKS serve as scaffolds for protein clustering. Interacts (via residues 1146-1167) with KANK1 (via ankyrin repeats 1-5) and KANK2 (via ankyrin repeats 1-5).

It localises to the cytoplasm. The protein localises to the cytoskeleton. Its subcellular location is the cell cortex. The protein resides in the cell projection. It is found in the axon. It localises to the dendrite. The protein localises to the growth cone. Its function is as follows. Processive microtubule plus-end directed motor protein involved in neuronal axon guidance. Is recruited by KANK1 to cortical microtubule stabilizing complexes (CMSCs) at focal adhesions (FAs) rims where it promotes microtubule capture and stability. Controls microtubule polymerization rate at axonal growth cones and suppresses microtubule growth without inducing microtubule disassembly once it reaches the cell cortex. This is Kinesin-like protein KIF21A (KIF21A) from Homo sapiens (Human).